The primary structure comprises 224 residues: MNTSWNDILETEKEKPYYQEMMTYINEARSQGKKIFPKEEDVFTAFSLTPFNNVTVVILGQDPYHGEGQAHGLSFSVLPGVKIPPSLRNMYKELAEDIEGFIPPTHGYLESWAEQGVLLLNTVLTVEESQAHSHAKLGWETFTDSIIEQLNEKKEGIIFLLWGAHAQKKGINIDAMKHSILVAPHPSPLSARRGFFGCQHFSKTNELLREKNLSEINWSSITLD.

The active-site Proton acceptor is the Asp62.

Belongs to the uracil-DNA glycosylase (UDG) superfamily. UNG family.

Its subcellular location is the cytoplasm. It catalyses the reaction Hydrolyzes single-stranded DNA or mismatched double-stranded DNA and polynucleotides, releasing free uracil.. In terms of biological role, excises uracil residues from the DNA which can arise as a result of misincorporation of dUMP residues by DNA polymerase or due to deamination of cytosine. In Aliivibrio salmonicida (strain LFI1238) (Vibrio salmonicida (strain LFI1238)), this protein is Uracil-DNA glycosylase.